A 164-amino-acid polypeptide reads, in one-letter code: Low molecular weight protein-tyrosine-phosphatase (164 aa).

Cys-9 (nucleophile) is an active-site residue. The active site involves Arg-15. Residue Asp-128 is the Proton donor of the active site.

It belongs to the low molecular weight phosphotyrosine protein phosphatase family.

It catalyses the reaction O-phospho-L-tyrosyl-[protein] + H2O = L-tyrosyl-[protein] + phosphate. Its function is as follows. Acts on tyrosine phosphorylated proteins, low-MW aryl phosphates and natural and synthetic acyl phosphates. May be involved in the regulation of sulfur amino acid metabolism. The protein is Low molecular weight protein-tyrosine-phosphatase (ptpA) of Streptomyces coelicolor (strain ATCC BAA-471 / A3(2) / M145).